A 248-amino-acid polypeptide reads, in one-letter code: Pulmonary surfactant-associated protein A2 (248 aa).

A signal peptide spans 1–20 (MWLCPLALTLILMAASGAAC). Positions 28 to 100 (GSPGIPGTPG…AGERGPPGLP (73 aa)) constitute a Collagen-like domain. Residues Pro30, Pro33, Pro36, Pro42, Pro54, Pro57, Pro63, Pro67, and Pro70 each carry the 4-hydroxyproline modification. Residues 33-101 (PGTPGSHGLP…GERGPPGLPA (69 aa)) form a disordered region. Positions 42–51 (PGRDGRDGVK) are enriched in basic and acidic residues. Residues 54 to 70 (PGPPGPMGPPGETPCPP) are compositionally biased toward pro residues. Positions 71–82 (GNNGLPGAPGVP) are enriched in low complexity. Residues 84 to 93 (ERGEKGEAGE) are compositionally biased toward basic and acidic residues. In terms of domain architecture, C-type lectin spans 132–248 (MTVGEKVFSS…LYSRLTICEF (117 aa)). 2 cysteine pairs are disulfide-bonded: Cys155-Cys246 and Cys224-Cys238. An N-linked (GlcNAc...) asparagine glycan is attached at Asn207.

This sequence belongs to the SFTPA family. In terms of assembly, oligomeric complex of 6 set of homotrimers. In terms of processing, N-acetylated.

Its subcellular location is the secreted. It localises to the extracellular space. The protein localises to the extracellular matrix. The protein resides in the surface film. In terms of biological role, in presence of calcium ions, it binds to surfactant phospholipids and contributes to lower the surface tension at the air-liquid interface in the alveoli of the mammalian lung and is essential for normal respiration. The polypeptide is Pulmonary surfactant-associated protein A2 (SFTPA2) (Homo sapiens (Human)).